The primary structure comprises 363 residues: Cinnamyl alcohol dehydrogenase 2 (363 aa).

Residue Cys47 coordinates Zn(2+). Thr49 contacts NADP(+). His69, Glu70, Cys100, Cys103, Cys106, Cys114, and Cys163 together coordinate Zn(2+). NADP(+) contacts are provided by residues Thr167, 188–193, 211–216, Thr251, Gly275, and 298–300; these read GLGGVG, SSSARK, and SFI.

It belongs to the zinc-containing alcohol dehydrogenase family. Homodimer. Zn(2+) serves as cofactor. In terms of tissue distribution, expressed in roots behind the root tips in the pericycle region and layer of cortical cells adjacent to the exodermis. Expressed in vascular bundles and lateral veins of leaf sheaths and blades. Expressed in the vicinity of vascular bundles in the first internode below the inflorescence. Highly expressed in the culm.

The catalysed reaction is (E)-cinnamyl alcohol + NADP(+) = (E)-cinnamaldehyde + NADPH + H(+). It carries out the reaction (E)-coniferol + NADP(+) = (E)-coniferaldehyde + NADPH + H(+). The enzyme catalyses (E)-sinapyl alcohol + NADP(+) = (E)-sinapaldehyde + NADPH + H(+). It catalyses the reaction (E)-4-coumaroyl alcohol + NADP(+) = (E)-4-coumaraldehyde + NADPH + H(+). The catalysed reaction is (E)-caffeyl alcohol + NADP(+) = (E)-caffeyl aldehyde + NADPH + H(+). It functions in the pathway aromatic compound metabolism; phenylpropanoid biosynthesis. In terms of biological role, involved in lignin biosynthesis. Catalyzes the final step specific for the production of lignin monomers. Catalyzes the NADPH-dependent reduction of coniferaldehyde and sinapaldehyde to their respective alcohols. Plays the major role in monolignol biosynthesis. Functions cooperatively with COMT in the culm internodes for the biosynthesis of monolignols, the lignin precursors. May be involved in lignin biosynthesis in leaves and roots. The polypeptide is Cinnamyl alcohol dehydrogenase 2 (Oryza sativa subsp. japonica (Rice)).